Consider the following 233-residue polypeptide: Orotidine 5'-phosphate decarboxylase (233 aa).

Substrate is bound by residues Asp11, Lys34, 61 to 70 (DLKLHDIPNT), Thr117, Arg179, Gln189, Gly209, and Arg210. The active-site Proton donor is Lys63.

This sequence belongs to the OMP decarboxylase family. Type 1 subfamily. Homodimer.

The catalysed reaction is orotidine 5'-phosphate + H(+) = UMP + CO2. The protein operates within pyrimidine metabolism; UMP biosynthesis via de novo pathway; UMP from orotate: step 2/2. Functionally, catalyzes the decarboxylation of orotidine 5'-monophosphate (OMP) to uridine 5'-monophosphate (UMP). The protein is Orotidine 5'-phosphate decarboxylase of Streptococcus agalactiae serotype Ia (strain ATCC 27591 / A909 / CDC SS700).